Here is a 412-residue protein sequence, read N- to C-terminus: Argininosuccinate synthase (412 aa).

ATP-binding positions include Ala15 to Ser23 and Ala42. L-citrulline-binding residues include Tyr93 and Ser98. Residue Gly123 coordinates ATP. L-aspartate-binding residues include Thr125, Asn129, and Asp130. Asn129 is a binding site for L-citrulline. Arg133, Ser185, Ser194, Glu270, and Tyr282 together coordinate L-citrulline.

Belongs to the argininosuccinate synthase family. Type 1 subfamily. Homotetramer.

The protein resides in the cytoplasm. The enzyme catalyses L-citrulline + L-aspartate + ATP = 2-(N(omega)-L-arginino)succinate + AMP + diphosphate + H(+). It participates in amino-acid biosynthesis; L-arginine biosynthesis; L-arginine from L-ornithine and carbamoyl phosphate: step 2/3. The sequence is that of Argininosuccinate synthase from Psychrobacter cryohalolentis (strain ATCC BAA-1226 / DSM 17306 / VKM B-2378 / K5).